Here is a 779-residue protein sequence, read N- to C-terminus: Transcription factor SPT20 homolog (779 aa).

Ser296 carries the phosphoserine modification. Disordered regions lie at residues 373–392 (DEES…DHSN) and 420–507 (PVKM…IPRK). Residues 424 to 437 (SHSSSGSASLSQVS) show a composition bias toward low complexity. The segment covering 445–454 (TETVSVQSSV) has biased composition (polar residues). Over residues 470–479 (SSSGNSSSGN) the composition is skewed to low complexity. The residue at position 494 (Thr494) is a Phosphothreonine. Phosphoserine is present on residues Ser519 and Ser524. Disordered regions lie at residues 641 to 677 (QLSQ…EQAL) and 755 to 779 (LHHH…TPKF). Residues 755–771 (LHHHRHTGSQSKSKMKR) show a composition bias toward basic residues.

This sequence belongs to the SPT20 family. As to quaternary structure, interacts with MAPK14. Interacts with ATG9A. In terms of tissue distribution, highly expressed in testis, moderately in brain and pituitary gland. Expressed in several fetal tissues, including lung, brain, thymus and kidney. Expression is down-regulated in malignant prostate tissues.

It is found in the nucleus. Its function is as follows. Required for MAP kinase p38 (MAPK11, MAPK12, MAPK13 and/or MAPK14) activation during gastrulation. Required for down-regulation of E-cadherin during gastrulation by regulating E-cadherin protein level downstream from NCK-interacting kinase (NIK) and independently of the regulation of transcription by FGF signaling and Snail. Required for starvation-induced ATG9A trafficking during autophagy. This chain is Transcription factor SPT20 homolog (SUPT20H), found in Homo sapiens (Human).